The chain runs to 248 residues: ATP synthase subunit a, chloroplastic (248 aa).

5 consecutive transmembrane segments (helical) span residues 39-59 (QVLITSWVVIAILLGSSILAV), 96-116 (VPFIGTLFLFIFVSNWSGALF), 135-155 (INTTVALALLTSVAYFYAGLT), 200-220 (LVVVVLLSLVPLVVPIPVMFL), and 221-241 (GLFTSGIQALIFATLAAAYIG).

It belongs to the ATPase A chain family. F-type ATPases have 2 components, CF(1) - the catalytic core - and CF(0) - the membrane proton channel. CF(1) has five subunits: alpha(3), beta(3), gamma(1), delta(1), epsilon(1). CF(0) has four main subunits: a, b, b' and c.

It is found in the plastid. The protein resides in the chloroplast thylakoid membrane. Key component of the proton channel; it plays a direct role in the translocation of protons across the membrane. This is ATP synthase subunit a, chloroplastic from Pelargonium hortorum (Common geranium).